Here is a 138-residue protein sequence, read N- to C-terminus: Large ribosomal subunit protein uL16 (138 aa).

The segment covering 1–13 has biased composition (basic residues); that stretch reads MLQPKRRKYRKEQ. Residues 1-20 are disordered; that stretch reads MLQPKRRKYRKEQKGRNTGI.

Belongs to the universal ribosomal protein uL16 family. In terms of assembly, part of the 50S ribosomal subunit.

Functionally, binds 23S rRNA and is also seen to make contacts with the A and possibly P site tRNAs. The protein is Large ribosomal subunit protein uL16 of Paraburkholderia phytofirmans (strain DSM 17436 / LMG 22146 / PsJN) (Burkholderia phytofirmans).